The following is a 339-amino-acid chain: MSTHLRKLPGLLLCLLLALPAWYLGRLFPIIGAPVFAILLGMLLALFYEHRDKTKEGISFTSKYILQTAVVLLGFGLNLTQVMAVGMQSLPIIISTIATALLVAYGSQKWLRIDVNTATLVGVGSSICGGSAIAATAPVIKAKDDEVAKAISVIFLFNMLAALLFPSLGQLLGLSNEGFAIFAGTAVNDTSSVTATATAWDALHHSNTLDGATIVKLTRTLAILPITLGLSLYRAKKEHDIVTEEGFSLRKSFPRFILFFLLASLITTLMISLGVSADVFHSLKTLSKFFIVMAMAAIGLNTNLVKLIKTGGQAILLGAICWVAITLVSLAMQLSLGIW.

A run of 9 helical transmembrane segments spans residues 7 to 24 (KLPG…AWYL), 28 to 50 (FPII…FYEH), 57 to 79 (GISF…GLNL), 84 to 106 (AVGM…VAYG), 118 to 140 (ATLV…APVI), 150 to 172 (AISV…GQLL), 256 to 275 (FILF…SLGV), 290 to 307 (FIVM…LVKL), and 314 to 336 (AILL…QLSL).

The protein belongs to the UPF0324 family.

The protein localises to the cell membrane. The polypeptide is UPF0324 membrane protein M6_Spy0799 (Streptococcus pyogenes serotype M6 (strain ATCC BAA-946 / MGAS10394)).